The sequence spans 153 residues: Aspartate carbamoyltransferase regulatory chain (153 aa).

Residues cysteine 109, cysteine 114, cysteine 138, and cysteine 141 each coordinate Zn(2+).

This sequence belongs to the PyrI family. Contains catalytic and regulatory chains. It depends on Zn(2+) as a cofactor.

In terms of biological role, involved in allosteric regulation of aspartate carbamoyltransferase. This is Aspartate carbamoyltransferase regulatory chain from Vibrio vulnificus (strain CMCP6).